Consider the following 140-residue polypeptide: Profilin-1 (140 aa).

A2 bears the N-acetylalanine mark. The residue at position 28 (S28) is a Phosphoserine. K54 participates in a covalent cross-link: Glycyl lysine isopeptide (Lys-Gly) (interchain with G-Cter in SUMO2); alternate. A Glycyl lysine isopeptide (Lys-Gly) (interchain with G-Cter in ubiquitin); alternate cross-link involves residue K54. A phosphoserine mark is found at S57 and S85. An N6-acetyllysine mark is found at K105 and K108. At Y129 the chain carries Phosphotyrosine. S138 is modified (phosphoserine; by ROCK1).

This sequence belongs to the profilin family. As to quaternary structure, found in a complex with XPO6, Ran, ACTB and PFN1. Interacts with ACTB. Interacts with VASP. Interacts with HTT. Interacts with SH3BGRL. Occurs in many kinds of cells as a complex with monomeric actin in a 1:1 ratio. Interacts with ACTMAP. In terms of processing, phosphorylation at Ser-138 reduces its affinity for G-actin and blocks its interaction with HTT, reducing its ability to inhibit androgen receptor (AR) and HTT aggregation. In terms of tissue distribution, expressed in epididymis (at protein level).

The protein localises to the cytoplasm. It localises to the cytoskeleton. Its function is as follows. Binds to actin and affects the structure of the cytoskeleton. At high concentrations, profilin prevents the polymerization of actin, whereas it enhances it at low concentrations. By binding to PIP2, it inhibits the formation of IP3 and DG. Inhibits androgen receptor (AR) and HTT aggregation and binding of G-actin is essential for its inhibition of AR. This chain is Profilin-1 (PFN1), found in Homo sapiens (Human).